Reading from the N-terminus, the 318-residue chain is Acetyl-coenzyme A carboxylase carboxyl transferase subunit alpha (318 aa).

One can recognise a CoA carboxyltransferase C-terminal domain in the interval 38 to 292; that stretch reads KLEKRLAKLE…NKTITKSLHA (255 aa).

The protein belongs to the AccA family. In terms of assembly, acetyl-CoA carboxylase is a heterohexamer composed of biotin carboxyl carrier protein (AccB), biotin carboxylase (AccC) and two subunits each of ACCase subunit alpha (AccA) and ACCase subunit beta (AccD).

The protein localises to the cytoplasm. The catalysed reaction is N(6)-carboxybiotinyl-L-lysyl-[protein] + acetyl-CoA = N(6)-biotinyl-L-lysyl-[protein] + malonyl-CoA. The protein operates within lipid metabolism; malonyl-CoA biosynthesis; malonyl-CoA from acetyl-CoA: step 1/1. Functionally, component of the acetyl coenzyme A carboxylase (ACC) complex. First, biotin carboxylase catalyzes the carboxylation of biotin on its carrier protein (BCCP) and then the CO(2) group is transferred by the carboxyltransferase to acetyl-CoA to form malonyl-CoA. This chain is Acetyl-coenzyme A carboxylase carboxyl transferase subunit alpha, found in Listeria monocytogenes serotype 4b (strain CLIP80459).